The following is a 72-amino-acid chain: Putative membrane protein insertion efficiency factor (72 aa).

The protein belongs to the UPF0161 family.

The protein resides in the cell inner membrane. In terms of biological role, could be involved in insertion of integral membrane proteins into the membrane. The protein is Putative membrane protein insertion efficiency factor of Amoebophilus asiaticus (strain 5a2).